The primary structure comprises 201 residues: Small ribosomal subunit protein uS4 (201 aa).

The disordered stretch occupies residues 22–47 (TGKELARRPYAPGDHGNDRRGKLSEY). Positions 93 to 153 (RRLDNMVYRL…EKSKNLDVIK (61 aa)) constitute an S4 RNA-binding domain.

The protein belongs to the universal ribosomal protein uS4 family. In terms of assembly, part of the 30S ribosomal subunit. Contacts protein S5. The interaction surface between S4 and S5 is involved in control of translational fidelity.

In terms of biological role, one of the primary rRNA binding proteins, it binds directly to 16S rRNA where it nucleates assembly of the body of the 30S subunit. Its function is as follows. With S5 and S12 plays an important role in translational accuracy. The protein is Small ribosomal subunit protein uS4 of Limosilactobacillus fermentum (strain NBRC 3956 / LMG 18251) (Lactobacillus fermentum).